The sequence spans 1011 residues: MAESDDEYDRKRRDKFRGERDSYRPERRDDRRPMGGGAGNARDEWAERNPFRGSAAAGGGGGGGGVGGGGGARHRPDYSDYRGSGPRPRYGSPGREMPPAKRMRPDWGDGEMRANPRFGYDPYLVQAWNDHYQSLHSAYSHSGHAPSAREPPPSGISNSDTQTQPAMLTLKQFLDTQDENISDSEVMRKYTEYKTDFKRQQLNEFFVAHKDEEWFKNKYHPEDSVRRSDEQRGFLKRRTDVFLELLNNGTISNVKVDSSQADALVRVLDTCVIKLEGGTDEDLKILDEKPKDPAPVYERRSERSERSEATESVVVTKREPESPKHQTKSEKDDDDLPEVESPQRKNVRPVNSDDEDWDDDEEMPAAKSEQQSELAAEKPAKQLNDEESMQANIDKNQKKSKKRKRTSSDDESSSSSSSESDSDSDDEKLIEKYDVEEGLRADQKAEAEKDKEEEEERAATAAAKAKQLPPDSPTPDEDVDAAAVEEQKNEVVAIKTEVNDEESQKTEQPAAEEEKSEQPKDDPEASSKNGEENEEEKAEKSEADTATTKAAAAAADDDAMTETIDVDKLKDSLKPRALHRTSSIFLRNLAPSITKAEIETICTRFSGYLRVAIADPLVERRWYRRGWITFTRDVNIKEICWSLNNQRLRDCEMGAIVNRDLSRRVRPANGITAHKQIVRSDIKLCAKIAMNLDERFKLWSEVDNADNAELNPEELKEATNGSGSYGFNSKNPVLQNITDYLIEEASAEEEELLGLAGDSKDGEGEPIERDEPLIQVLDRLVLYLRVVHSVDYYNHCEYPYEDEMPNRCGIIHARGPAPMRVTSNDVQEYIKSYEGKLQQFLAKTVQLSDENIKELGAKNPEKEVEKFVQANTQELAKDKWLCPLSGKKFKGPEFIRKHIFNKHEEKVDEVRKEVQYFNNYLRDPKRPQLPEHPGSSKRTESESGRGSGGYRPPMYPPFSAMPYGFAPPMMGGGGRGGRNFPQARREMPVEHQRRLIGYHDLDAPVNSDMFD.

Disordered stretches follow at residues 1-113, 138-162, 284-558, and 919-953; these read MAES…GEMR, AYSHSGHAPSAREPPPSGISNSDTQ, KILD…ADDD, and NYLRDPKRPQLPEHPGSSKRTESESGRGSGGYRPP. Basic and acidic residues-rich tracts occupy residues 8–33 and 41–50; these read YDRKRRDKFRGERDSYRPERRDDRRP and ARDEWAERNP. Positions 56 to 71 are enriched in gly residues; the sequence is AAGGGGGGGGVGGGGG. Residues 81 to 95 are compositionally biased toward low complexity; the sequence is YRGSGPRPRYGSPGR. Tyr90 is modified (phosphotyrosine). Ser92 carries the post-translational modification Phosphoserine. Residues 103–113 are compositionally biased toward basic and acidic residues; that stretch reads MRPDWGDGEMR. Basic and acidic residues-rich tracts occupy residues 284 to 309 and 316 to 331; these read KILDEKPKDPAPVYERRSERSERSEA and TKREPESPKHQTKSEK. A phosphoserine mark is found at Ser322 and Ser352. Over residues 352–363 the composition is skewed to acidic residues; it reads SDDEDWDDDEEM. Basic and acidic residues-rich tracts occupy residues 375–384 and 427–450; these read AAEKPAKQLN and EKLIEKYDVEEGLRADQKAEAEKD. Ser472 bears the Phosphoserine mark. The segment covering 512-543 has biased composition (basic and acidic residues); sequence EEEKSEQPKDDPEASSKNGEENEEEKAEKSEA. The span at 544–554 shows a compositional bias: low complexity; sequence DTATTKAAAAA.

This sequence belongs to the ARS2 family. In terms of assembly, interacts with cbp20, Dcr-2 and pasha.

It localises to the nucleus. Functionally, acts as a mediator between the cap-binding complex (CBC) and RNA-mediated gene silencing (RNAi). Involved in innate immunity via the short interfering RNAs (siRNAs) processing machinery by restricting the viral RNA production. Also involved microRNA (miRNA)-mediated silencing by contributing to the stability and delivery of primary miRNA transcripts to the primary miRNA processing complex containing drosha and pasha. In Drosophila grimshawi (Hawaiian fruit fly), this protein is Serrate RNA effector molecule homolog (Ars2).